A 311-amino-acid chain; its full sequence is Formimidoylglutamase (311 aa).

Mn(2+) contacts are provided by histidine 130, aspartate 155, histidine 157, aspartate 159, cysteine 242, and aspartate 244.

It belongs to the arginase family. It depends on Mn(2+) as a cofactor.

It catalyses the reaction N-formimidoyl-L-glutamate + H2O = formamide + L-glutamate. Its pathway is amino-acid degradation; L-histidine degradation into L-glutamate; L-glutamate from N-formimidoyl-L-glutamate (hydrolase route): step 1/1. Functionally, catalyzes the conversion of N-formimidoyl-L-glutamate to L-glutamate and formamide. This is Formimidoylglutamase from Staphylococcus aureus (strain bovine RF122 / ET3-1).